The sequence spans 432 residues: MMHQSLGLGLVVFVAAPVVAFQTQYPLSPPFPERLHEEWDESCSISKSTAFETFKGPNNFSTSPSEHIHSVKITPSINATNWEQWEFDGLSHTGLSGLLMAFSRDASYAFFGQGNLRVEFYITLGDGTVIQELDYISESYVADCPGFTAGVWNSSDRSYSFHVTKDHQFARLKFDSWRVRGGFTMSSSTKPHLADGSPWTADGGKADATEISPGLHYGLSMGGADVNVDATLSSGRRIAFKGRGGSTRLWATDGWLKLCEGWKVFRAWAGPYSIVYWDVMGRMGRPGKYVSGHLFYNDELLVGSRVGNVSAEEDYVLFTDNYDGEMSGRYKDKNTGHTFEFASPSKDKKWKFDMQHVVTQYEMGAGAGFGMSGFANRVVGGEVGGVQYEGKGHSEQTYWPEYIEEWKIWLVWGFGFLGKGKTYVMKMVSYVL.

The signal sequence occupies residues 1–20 (MMHQSLGLGLVVFVAAPVVA). N-linked (GlcNAc...) asparagine glycosylation is found at Asn59, Asn78, Asn153, and Asn308.

The protein belongs to the Diels-Alderase family.

It functions in the pathway mycotoxin biosynthesis. Functionally, hexane cyclase; part of the gene cluster that mediates the biosynthesis of pyrrocidines, fungal natural products containing a macrocyclic para-cyclophane connected to a decahydrofluorene ring system that show potent antibiotic activities toward Gram-negative bacteria. Within the pathway, pydB functions synergistically with pydE, pydX and pydZ to form the cyclophane. The pathway begins with the PKS-NRPS pydA which, with the help of the trans-enoyl reductase pydC, synthesizes the polyketide-tyrosyl acyl thioester product which can be reductively off-loaded by the terminal reductase (R) domain in pydA. The alpha/beta hydrolase pydG is then required to catalyze the subsequent Knoevenagel condensation that affords the 3-pyrrolin-2-one ring, whereas the four proteins pydB, pydE, pydX and pydZ then function synergistically to form the cyclophane. PydB and the membrane-bound pydX and pydZ are lipid-binding proteins that can sequester and mold the pdyG product into the inverse S-shape. Binding of the medium chain reductase pydE to the complex would trigger the cascade oxidative cyclization. PydY is involved the Diels-Alder cycloaddition that forms the decahydrofluorene core. Additional non-enzymatic hydroxylation yields pyrrocidine A2 which can be further reduced into pyrrocidine B by an endogenous reductase. This Acremonium sp protein is Hexane cyclase pydB.